Consider the following 101-residue polypeptide: Urease subunit beta (101 aa).

It belongs to the urease beta subunit family. Heterotrimer of UreA (gamma), UreB (beta) and UreC (alpha) subunits. Three heterotrimers associate to form the active enzyme.

It localises to the cytoplasm. The enzyme catalyses urea + 2 H2O + H(+) = hydrogencarbonate + 2 NH4(+). It participates in nitrogen metabolism; urea degradation; CO(2) and NH(3) from urea (urease route): step 1/1. The chain is Urease subunit beta from Bradyrhizobium sp. (strain BTAi1 / ATCC BAA-1182).